We begin with the raw amino-acid sequence, 87 residues long: Small ribosomal subunit protein bS16 (87 aa).

It belongs to the bacterial ribosomal protein bS16 family.

The sequence is that of Small ribosomal subunit protein bS16 from Aster yellows witches'-broom phytoplasma (strain AYWB).